The primary structure comprises 1001 residues: Translation initiation factor IF-2 (1001 aa).

The interval 56–418 is disordered; the sequence is PDYVHDPNAV…VEAGPPPISR (363 aa). The segment covering 70–84 has biased composition (basic and acidic residues); that stretch reads TEAHEERHEHEEAHE. A compositionally biased stretch (low complexity) spans 85–108; the sequence is PAAAPKAAVEPETPVAPAPEAAPA. Basic and acidic residues predominate over residues 109 to 120; it reads AKEERPAPEEPA. 6 stretches are compositionally biased toward pro residues: residues 136 to 170, 180 to 194, 204 to 217, 229 to 252, 305 to 322, and 345 to 357; these read IHPP…PHAP, PARP…PSQT, RPAP…PTTT, QPFP…PPQQ, PAAP…PVPG, and GMPP…PRPQ. A compositionally biased stretch (basic and acidic residues) spans 379–410; sequence SRGRPGDRRPVRQQRERTEEEKILRPQRRHVE. In terms of domain architecture, tr-type G spans 499-668; sequence RRAPVVTIMG…LLVADMQDLK (170 aa). Positions 508–515 are G1; sequence GHVDHGKT. Residue 508–515 participates in GTP binding; that stretch reads GHVDHGKT. The G2 stretch occupies residues 533-537; the sequence is GITQH. Positions 554–557 are G3; sequence DTPG. Residues 554–558 and 608–611 contribute to the GTP site; these read DTPGH and NKID. The interval 608–611 is G4; sequence NKID. The tract at residues 644-646 is G5; that stretch reads SAR.

Belongs to the TRAFAC class translation factor GTPase superfamily. Classic translation factor GTPase family. IF-2 subfamily.

It localises to the cytoplasm. Functionally, one of the essential components for the initiation of protein synthesis. Protects formylmethionyl-tRNA from spontaneous hydrolysis and promotes its binding to the 30S ribosomal subunits. Also involved in the hydrolysis of GTP during the formation of the 70S ribosomal complex. This Solibacter usitatus (strain Ellin6076) protein is Translation initiation factor IF-2.